Consider the following 84-residue polypeptide: METVITATIIGASILLAFAALGTAIGFAILGGKFLESSARQPELASSLQTKMFIVAGLLDAIAMIAVGISLLFIFANPFIGLLH.

2 helical membrane passes run 9–29 and 54–74; these read IIGA…GFAI and IVAG…LLFI.

This sequence belongs to the ATPase C chain family. In terms of assembly, F-type ATPases have 2 components, F(1) - the catalytic core - and F(0) - the membrane proton channel. F(1) has five subunits: alpha(3), beta(3), gamma(1), delta(1), epsilon(1). F(0) has three main subunits: a(1), b(2) and c(10-14). The alpha and beta chains form an alternating ring which encloses part of the gamma chain. F(1) is attached to F(0) by a central stalk formed by the gamma and epsilon chains, while a peripheral stalk is formed by the delta and b chains.

The protein localises to the cell inner membrane. F(1)F(0) ATP synthase produces ATP from ADP in the presence of a proton or sodium gradient. F-type ATPases consist of two structural domains, F(1) containing the extramembraneous catalytic core and F(0) containing the membrane proton channel, linked together by a central stalk and a peripheral stalk. During catalysis, ATP synthesis in the catalytic domain of F(1) is coupled via a rotary mechanism of the central stalk subunits to proton translocation. In terms of biological role, key component of the F(0) channel; it plays a direct role in translocation across the membrane. A homomeric c-ring of between 10-14 subunits forms the central stalk rotor element with the F(1) delta and epsilon subunits. The protein is ATP synthase subunit c of Haemophilus influenzae (strain PittEE).